A 72-amino-acid polypeptide reads, in one-letter code: MSLGLAIAVGIVLGVVASSLCNKNNHLNRSREFSVIQKDEELNVLEINFNDFYRTTLNVGELSMSTRKTNNC.

The signal sequence occupies residues M1 to A17.

This is an uncharacterized protein from Schizosaccharomyces pombe (strain 972 / ATCC 24843) (Fission yeast).